We begin with the raw amino-acid sequence, 269 residues long: Phosphatidylglycerol--prolipoprotein diacylglyceryl transferase (269 aa).

A run of 3 helical transmembrane segments spans residues 21–41 (WYGI…VLEG), 54–74 (LLLY…VVFE), and 88–108 (IWDG…VILI). An a 1,2-diacyl-sn-glycero-3-phospho-(1'-sn-glycerol)-binding site is contributed by R136. Transmembrane regions (helical) follow at residues 206–226 (GEVV…IEGM) and 236–256 (LRVS…AIFY).

This sequence belongs to the Lgt family.

Its subcellular location is the cell membrane. The enzyme catalyses L-cysteinyl-[prolipoprotein] + a 1,2-diacyl-sn-glycero-3-phospho-(1'-sn-glycerol) = an S-1,2-diacyl-sn-glyceryl-L-cysteinyl-[prolipoprotein] + sn-glycerol 1-phosphate + H(+). It functions in the pathway protein modification; lipoprotein biosynthesis (diacylglyceryl transfer). Functionally, catalyzes the transfer of the diacylglyceryl group from phosphatidylglycerol to the sulfhydryl group of the N-terminal cysteine of a prolipoprotein, the first step in the formation of mature lipoproteins. This chain is Phosphatidylglycerol--prolipoprotein diacylglyceryl transferase, found in Ligilactobacillus salivarius (strain UCC118) (Lactobacillus salivarius).